We begin with the raw amino-acid sequence, 223 residues long: MGSKINPIGFRLGVNRDWEAKWYAARGYKETLNEDLRIRKFLDEKLKDASVSTVEIERAANRVNIAIHTARPGMVIGKGGAEVEALNKEINALTNKQVHINIVEIKKPDLEAKLVADGIARQLEARIAFRRASRQAAQRSMRAGAKGIKVQIAGRLNGADIARREWHTEGSVPLHTLRADIDYAWVNAFTTYGEIGVKVWINRGEILPGRKNQPAKRSKGGKK.

The KH type-2 domain occupies Ile38–Lys106.

It belongs to the universal ribosomal protein uS3 family. As to quaternary structure, part of the 30S ribosomal subunit. Forms a tight complex with proteins S10 and S14.

Binds the lower part of the 30S subunit head. Binds mRNA in the 70S ribosome, positioning it for translation. The chain is Small ribosomal subunit protein uS3 from Lactobacillus delbrueckii subsp. bulgaricus (strain ATCC 11842 / DSM 20081 / BCRC 10696 / JCM 1002 / NBRC 13953 / NCIMB 11778 / NCTC 12712 / WDCM 00102 / Lb 14).